A 330-amino-acid polypeptide reads, in one-letter code: Inactive serine protease 45 (330 aa).

The first 35 residues, 1 to 35, serve as a signal peptide directing secretion; sequence MATSLRLLDAGPGSLRRWIPTCFAALLLLPPRPNL. Residues 45–291 enclose the Peptidase S1 domain; sequence VCGAPWWSDS…YTGWIKEQVS (247 aa). 4 disulfide bridges follow: cysteine 75-cysteine 91, cysteine 172-cysteine 249, cysteine 207-cysteine 230, and cysteine 239-cysteine 267. An N-linked (GlcNAc...) asparagine glycan is attached at asparagine 272.

Belongs to the peptidase S1 family.

The protein localises to the secreted. The sequence is that of Inactive serine protease 45 (Prss45) from Rattus norvegicus (Rat).